Here is a 158-residue protein sequence, read N- to C-terminus: C-type lectin BfL-1 (158 aa).

The N-terminal stretch at 1–21 (MGHFTFIGLCLLAMFLSLSGA) is a signal peptide. 4 disulfide bridges follow: Cys-26/Cys-37, Cys-54/Cys-154, Cys-61/Cys-156, and Cys-129/Cys-146. The region spanning 33-155 (KNGLCYKVFS…CAALRPFLCQ (123 aa)) is the C-type lectin domain. The Ca(2+) site is built by Gln-119, Asp-121, and Glu-127. The Galactose-binding signature appears at 119–121 (QPD). Asn-134 carries N-linked (GlcNAc...) asparagine glycosylation. Ca(2+) is bound by residues Asn-142 and Asp-143.

Belongs to the true venom lectin family. In terms of assembly, homodimer; non-covalently linked. In terms of tissue distribution, expressed by the venom gland.

It is found in the secreted. In terms of biological role, galactose-binding lectin which recognizes specific carbohydrate structures and agglutinates a variety of animal cells by binding to cell-surface glycoproteins and glycolipids. May be a calcium-dependent lectin. This is C-type lectin BfL-1 from Bungarus fasciatus (Banded krait).